The sequence spans 387 residues: Phosphoglycerate kinase (387 aa).

Residues 21-23 (DLN), Arg-36, 59-62 (HLGR), Arg-113, and Arg-146 each bind substrate. Residues Lys-197, Glu-314, and 340 to 343 (GGDT) each bind ATP.

Belongs to the phosphoglycerate kinase family. Monomer.

It is found in the cytoplasm. It catalyses the reaction (2R)-3-phosphoglycerate + ATP = (2R)-3-phospho-glyceroyl phosphate + ADP. It functions in the pathway carbohydrate degradation; glycolysis; pyruvate from D-glyceraldehyde 3-phosphate: step 2/5. This chain is Phosphoglycerate kinase, found in Aliivibrio fischeri (strain MJ11) (Vibrio fischeri).